A 257-amino-acid chain; its full sequence is Ribonuclease HII (257 aa).

The region spanning 72–257 (ERVAGIDEVG…FSPVQKILQA (186 aa)) is the RNase H type-2 domain. A divalent metal cation is bound by residues D78, E79, and D170.

Belongs to the RNase HII family. Mn(2+) serves as cofactor. The cofactor is Mg(2+).

Its subcellular location is the cytoplasm. The enzyme catalyses Endonucleolytic cleavage to 5'-phosphomonoester.. Endonuclease that specifically degrades the RNA of RNA-DNA hybrids. This is Ribonuclease HII from Levilactobacillus brevis (strain ATCC 367 / BCRC 12310 / CIP 105137 / JCM 1170 / LMG 11437 / NCIMB 947 / NCTC 947) (Lactobacillus brevis).